A 21-amino-acid chain; its full sequence is Apolipophorin 2 (21 aa).

As to expression, expressed in hemolymph.

The protein localises to the secreted. Functionally, constitutes the major component of lipophorin, which mediates transport for various types of lipids in hemolymph. Acts by forming lipoprotein particles that bind lipoproteins and lipids. This Galleria mellonella (Greater wax moth) protein is Apolipophorin 2.